Reading from the N-terminus, the 395-residue chain is L-methionine gamma-lyase (395 aa).

Residues Tyr-56–Arg-58 and Gly-86–Met-87 each bind pyridoxal 5'-phosphate. Tyr-111 is a substrate binding site. Ser-206 to Thr-208 provides a ligand contact to pyridoxal 5'-phosphate. Lys-209 is subject to N6-(pyridoxal phosphate)lysine. Arg-373 provides a ligand contact to substrate.

It belongs to the trans-sulfuration enzymes family. L-methionine gamma-lyase subfamily. In terms of assembly, homotetramer. The cofactor is pyridoxal 5'-phosphate.

It catalyses the reaction L-methionine + H2O = methanethiol + 2-oxobutanoate + NH4(+). The catalysed reaction is L-homocysteine + H2O = 2-oxobutanoate + hydrogen sulfide + NH4(+) + H(+). It carries out the reaction L-cysteine + H2O = hydrogen sulfide + pyruvate + NH4(+) + H(+). Catalyzes the alpha,gamma-elimination of L-methionine to produce methanethiol, 2-oxobutanoate and ammonia, and that of L-homocysteine. Can also use L-cysteine as substrate, catalyzing its alpha,beta-elimination; this activity seems to only minimally contribute to the production of hydrogen sulfide (H2S) by F.nucleatum in the oral cavity, which is toxic for a large variety of cells in periodontal regions. The chain is L-methionine gamma-lyase from Fusobacterium nucleatum subsp. nucleatum (strain ATCC 25586 / DSM 15643 / BCRC 10681 / CIP 101130 / JCM 8532 / KCTC 2640 / LMG 13131 / VPI 4355).